The primary structure comprises 300 residues: Aspartate carbamoyltransferase catalytic subunit (300 aa).

The carbamoyl phosphate site is built by Arg-54 and Thr-55. Lys-82 serves as a coordination point for L-aspartate. Carbamoyl phosphate contacts are provided by Arg-104, His-131, and Gln-134. L-aspartate-binding residues include Arg-164 and Arg-213. Residues Ala-256 and Pro-257 each coordinate carbamoyl phosphate.

This sequence belongs to the aspartate/ornithine carbamoyltransferase superfamily. ATCase family. In terms of assembly, heterododecamer (2C3:3R2) of six catalytic PyrB chains organized as two trimers (C3), and six regulatory PyrI chains organized as three dimers (R2).

The enzyme catalyses carbamoyl phosphate + L-aspartate = N-carbamoyl-L-aspartate + phosphate + H(+). It participates in pyrimidine metabolism; UMP biosynthesis via de novo pathway; (S)-dihydroorotate from bicarbonate: step 2/3. In terms of biological role, catalyzes the condensation of carbamoyl phosphate and aspartate to form carbamoyl aspartate and inorganic phosphate, the committed step in the de novo pyrimidine nucleotide biosynthesis pathway. The protein is Aspartate carbamoyltransferase catalytic subunit of Malacoplasma penetrans (strain HF-2) (Mycoplasma penetrans).